The sequence spans 400 residues: Aminomethyltransferase, mitochondrial (400 aa).

Positions 221, 250, and 397 each coordinate substrate.

Belongs to the GcvT family. In terms of assembly, component of the glycine decarboxylase complex (GDC), which is composed of four proteins: P, T, L and H.

It localises to the mitochondrion. The catalysed reaction is N(6)-[(R)-S(8)-aminomethyldihydrolipoyl]-L-lysyl-[protein] + (6S)-5,6,7,8-tetrahydrofolate = N(6)-[(R)-dihydrolipoyl]-L-lysyl-[protein] + (6R)-5,10-methylene-5,6,7,8-tetrahydrofolate + NH4(+). Functionally, the glycine cleavage system (glycine decarboxylase complex) catalyzes the degradation of glycine. This chain is Aminomethyltransferase, mitochondrial (GCV1), found in Saccharomyces cerevisiae (strain ATCC 204508 / S288c) (Baker's yeast).